A 152-amino-acid polypeptide reads, in one-letter code: Ribosomal RNA large subunit methyltransferase H (152 aa).

Residues Leu68, Gly100, and 119–124 (FGPMTW) contribute to the S-adenosyl-L-methionine site.

The protein belongs to the RNA methyltransferase RlmH family. As to quaternary structure, homodimer.

It is found in the cytoplasm. The enzyme catalyses pseudouridine(1915) in 23S rRNA + S-adenosyl-L-methionine = N(3)-methylpseudouridine(1915) in 23S rRNA + S-adenosyl-L-homocysteine + H(+). Specifically methylates the pseudouridine at position 1915 (m3Psi1915) in 23S rRNA. This is Ribosomal RNA large subunit methyltransferase H from Rhodospirillum centenum (strain ATCC 51521 / SW).